A 1101-amino-acid polypeptide reads, in one-letter code: Translation initiation factor IF-2 (1101 aa).

Disordered stretches follow at residues 81–437 (QEIL…EDDF) and 452–509 (SIST…QRAE). A compositionally biased stretch (polar residues) spans 93–108 (PFSSTDAPVGSGQSSP). Pro residues predominate over residues 110–124 (IEPPRPPMKPQPPSP). Composition is skewed to polar residues over residues 128–149 (EVTS…GSSS) and 157–184 (SPMS…QLKY). A compositionally biased stretch (low complexity) spans 185–196 (NQEQSNQLEQES). Residues 197 to 206 (AISSELSEVN) are compositionally biased toward polar residues. Basic and acidic residues-rich tracts occupy residues 228-237 (SKEKEAKSNE), 248-288 (KENK…DKKS), and 295-340 (VKRE…ELKR). Residues 361-378 (EPEDVEDTAEDLLEEDPL) are compositionally biased toward acidic residues. Composition is skewed to basic residues over residues 385-397 (PKLK…KVGK) and 414-428 (KAGK…KRRQ). Over residues 484-506 (EPGRGKSAERERSERKDRKEQPQ) the composition is skewed to basic and acidic residues. Residues 592 to 765 (RRPPVVTIMG…LLVAEVGELS (174 aa)) enclose the tr-type G domain. A G1 region spans residues 601-608 (GHVDHGKT). 601-608 (GHVDHGKT) provides a ligand contact to GTP. A G2 region spans residues 626 to 630 (GITQH). The G3 stretch occupies residues 651–654 (DTPG). GTP contacts are provided by residues 651 to 655 (DTPGH) and 705 to 708 (NKID). Residues 705-708 (NKID) are G4. Residues 741–743 (SAL) are G5.

This sequence belongs to the TRAFAC class translation factor GTPase superfamily. Classic translation factor GTPase family. IF-2 subfamily.

Its subcellular location is the cytoplasm. One of the essential components for the initiation of protein synthesis. Protects formylmethionyl-tRNA from spontaneous hydrolysis and promotes its binding to the 30S ribosomal subunits. Also involved in the hydrolysis of GTP during the formation of the 70S ribosomal complex. This is Translation initiation factor IF-2 from Gloeothece citriformis (strain PCC 7424) (Cyanothece sp. (strain PCC 7424)).